The primary structure comprises 337 residues: uncharacterized protein (337 aa).

Belongs to the mimivirus R69 family.

This is an uncharacterized protein from Acanthamoeba polyphaga mimivirus (APMV).